An 802-amino-acid polypeptide reads, in one-letter code: ATP-dependent RNA helicase dbp4 (802 aa).

Positions 1-24 (MAPINGSRNGKHSKPQRGGNLKRK) are disordered. Basic residues predominate over residues 9–24 (NGKHSKPQRGGNLKRK). The Q motif motif lies at 47–75 (EQFTDLPLSEPTASGLASSHYKTLTDIQS). The Helicase ATP-binding domain maps to 78–252 (ISHALKGRDI…RLSLQDPEYV (175 aa)). 91 to 98 (AKTGSGKT) serves as a coordination point for ATP. Positions 200 to 203 (DEAD) match the DEAD box motif. Residues 274-437 (PLPQKLDVLW…SIKDQLQNMC (164 aa)) form the Helicase C-terminal domain. Disordered regions lie at residues 494-538 (GDDT…KYDR), 589-614 (DKDL…KGAK), and 685-802 (LAEE…GLLG). Basic and acidic residues predominate over residues 520 to 538 (GEKKKTKKDETQVRTKYDR). Over residues 685–704 (LAEEAERTRQADLEDKEVAK) the composition is skewed to basic and acidic residues. A compositionally biased stretch (basic residues) spans 705-714 (QKKREKKEKR).

This sequence belongs to the DEAD box helicase family. DDX10/DBP4 subfamily. In terms of assembly, interacts with the U3 and U14 snoRNAs. Associates with pre-ribosomal complexes.

It localises to the nucleus. The protein resides in the nucleolus. The catalysed reaction is ATP + H2O = ADP + phosphate + H(+). In terms of biological role, ATP-dependent RNA helicase required for ribosome biogenesis. Involved in the release of U14 snoRNA in pre-ribosomal complexes. Required for pre-rRNA cleavage at site A2. The polypeptide is ATP-dependent RNA helicase dbp4 (dbp4) (Aspergillus niger (strain ATCC MYA-4892 / CBS 513.88 / FGSC A1513)).